The sequence spans 86 residues: MKNLIAELLFKLAQKEEESKELCAQVEALEIIVTAMLRNMAQNDQQRVIDQVEGALYEVKPDASIPDDDTELLRDYVKKLLKHPRQ.

The stretch at 1–36 (MKNLIAELLFKLAQKEEESKELCAQVEALEIIVTAM) forms a coiled coil.

This sequence belongs to the IraP family. Interacts with RssB.

It localises to the cytoplasm. In terms of biological role, inhibits RpoS proteolysis by regulating RssB activity, thereby increasing the stability of the sigma stress factor RpoS especially during phosphate starvation, but also in stationary phase and during nitrogen starvation. Its effect on RpoS stability is due to its interaction with RssB, which probably blocks the interaction of RssB with RpoS, and the consequent delivery of the RssB-RpoS complex to the ClpXP protein degradation pathway. The protein is Anti-adapter protein IraP of Escherichia coli (strain SE11).